The primary structure comprises 335 residues: UPF0284 protein TK0853 (335 aa).

This sequence belongs to the UPF0284 family.

This chain is UPF0284 protein TK0853, found in Thermococcus kodakarensis (strain ATCC BAA-918 / JCM 12380 / KOD1) (Pyrococcus kodakaraensis (strain KOD1)).